Here is a 922-residue protein sequence, read N- to C-terminus: Isoleucine--tRNA ligase (922 aa).

The short motif at 57–67 (PYANGDIHLGH) is the 'HIGH' region element. Glu-553 lines the L-isoleucyl-5'-AMP pocket. The short motif at 594–598 (KMSKS) is the 'KMSKS' region element. Lys-597 is an ATP binding site. Residues Cys-892, Cys-895, Cys-912, and Cys-915 each coordinate Zn(2+).

It belongs to the class-I aminoacyl-tRNA synthetase family. IleS type 1 subfamily. Monomer. Zn(2+) serves as cofactor.

It is found in the cytoplasm. It carries out the reaction tRNA(Ile) + L-isoleucine + ATP = L-isoleucyl-tRNA(Ile) + AMP + diphosphate. Its function is as follows. Catalyzes the attachment of isoleucine to tRNA(Ile). As IleRS can inadvertently accommodate and process structurally similar amino acids such as valine, to avoid such errors it has two additional distinct tRNA(Ile)-dependent editing activities. One activity is designated as 'pretransfer' editing and involves the hydrolysis of activated Val-AMP. The other activity is designated 'posttransfer' editing and involves deacylation of mischarged Val-tRNA(Ile). The chain is Isoleucine--tRNA ligase from Desulfitobacterium hafniense (strain DSM 10664 / DCB-2).